The following is a 345-amino-acid chain: Phenylalanine--tRNA ligase alpha subunit (345 aa).

Glu-259 contributes to the Mg(2+) binding site.

The protein belongs to the class-II aminoacyl-tRNA synthetase family. Phe-tRNA synthetase alpha subunit type 1 subfamily. As to quaternary structure, tetramer of two alpha and two beta subunits. Mg(2+) is required as a cofactor.

Its subcellular location is the cytoplasm. The catalysed reaction is tRNA(Phe) + L-phenylalanine + ATP = L-phenylalanyl-tRNA(Phe) + AMP + diphosphate + H(+). The protein is Phenylalanine--tRNA ligase alpha subunit of Lactococcus lactis subsp. cremoris (strain MG1363).